The primary structure comprises 446 residues: MAPVIPAASAPHKPRKFYQHLYVQVLAAIAIGILLGHFYPDLGTQMKPLGDAFIKLVKMVIAPVIFLTVVTGIAGMRDLAKVGRVAGKAMIYFLTFSTLALIIGLIIANVVQPGAGMHIAPASLDPKAVASYAAKAHDASIIGFLMNIIPDTPISALGSGDILQVLFFSVLFGIALAGVGDRGEPVMNVLVSASQAMFRLVHILMKAAPIGAFGAMAFTIGRYGIGSVANLAFLILTFYITSFLFVVVVLGLVARYNGFSIFALLRYIKEELLLVLGTSSSEAALPSLIEKMERAGCRKSVVGLVIPTGYSFNLDGTNIYMTLAALFIAQATDIHLSLGDQILLLLVAMLSSKGAAGITGAGFITLAATLSVVPTVPLAGMALILGIDRFMSECRAITNFIGNAVATIVVARWEGELDKDKLAAALSGRISVEDDDLPIEATSPAQ.

Transmembrane regions (helical) follow at residues 20–40 (HLYVQVLAAIAIGILLGHFYP), 56–76 (LVKMVIAPVIFLTVVTGIAGM), 91–111 (IYFLTFSTLALIIGLIIANVV), 160–180 (GDILQVLFFSVLFGIALAGVG), 200–220 (LVHILMKAAPIGAFGAMAFTI), 233–253 (FLILTFYITSFLFVVVVLGLV), 319–339 (IYMTLAALFIAQATDIHLSLG), 344–364 (LLLVAMLSSKGAAGITGAGFI), and 367–387 (AATLSVVPTVPLAGMALILGI).

Belongs to the dicarboxylate/amino acid:cation symporter (DAACS) (TC 2.A.23) family.

It is found in the cell inner membrane. Responsible for the transport of dicarboxylates such as succinate, fumarate, and malate from the periplasm across the membrane. The protein is C4-dicarboxylate transport protein of Azorhizobium caulinodans (strain ATCC 43989 / DSM 5975 / JCM 20966 / LMG 6465 / NBRC 14845 / NCIMB 13405 / ORS 571).